Consider the following 202-residue polypeptide: MTLWLGPQPLVLASQSRARQTVLANAGIPFDAIPADIDERGIAEASGLSAPGDIAALLAQQKAAFVSNYHPGRLVLGADQTLALGARGFNKPADRAAAAKQLRELAGRRHELHSAVAVVRNGITLFADVAIARMTMRPLTEAEIEAYLDVVGDKATTSVGAYQIEGLGVHLFDGIHGDHFTILGLPLLPLLGFLRSQNLLAV.

The active-site Proton acceptor is Asp79.

This sequence belongs to the Maf family. Requires a divalent metal cation as cofactor.

It is found in the cytoplasm. It catalyses the reaction a ribonucleoside 5'-triphosphate + H2O = a ribonucleoside 5'-phosphate + diphosphate + H(+). It carries out the reaction a 2'-deoxyribonucleoside 5'-triphosphate + H2O = a 2'-deoxyribonucleoside 5'-phosphate + diphosphate + H(+). Nucleoside triphosphate pyrophosphatase. May have a dual role in cell division arrest and in preventing the incorporation of modified nucleotides into cellular nucleic acids. The sequence is that of Nucleoside triphosphate pyrophosphatase from Rhodopseudomonas palustris (strain ATCC BAA-98 / CGA009).